The sequence spans 419 residues: GTPase Obg (419 aa).

Residues 1–158 (MHFVDEAFNE…FKIKTELKVL (158 aa)) form the Obg domain. An OBG-type G domain is found at 159–324 (ADIGLLGFPS…LKYKMSSFLQ (166 aa)). GTP-binding positions include 165 to 172 (GFPSVGKS), 190 to 194 (FTTIK), 211 to 214 (DLPG), 278 to 281 (NKMD), and 305 to 307 (SLV). 2 residues coordinate Mg(2+): S172 and T192. The region spanning 342 to 419 (TLTDNLKTIS…KICDRLFDFL (78 aa)) is the OCT domain.

It belongs to the TRAFAC class OBG-HflX-like GTPase superfamily. OBG GTPase family. Monomer. It depends on Mg(2+) as a cofactor.

Its subcellular location is the cytoplasm. Its function is as follows. An essential GTPase which binds GTP, GDP and possibly (p)ppGpp with moderate affinity, with high nucleotide exchange rates and a fairly low GTP hydrolysis rate. Plays a role in control of the cell cycle, stress response, ribosome biogenesis and in those bacteria that undergo differentiation, in morphogenesis control. The protein is GTPase Obg of Aster yellows witches'-broom phytoplasma (strain AYWB).